A 149-amino-acid chain; its full sequence is Protein-export protein SecB (149 aa).

The protein belongs to the SecB family. Homotetramer, a dimer of dimers. One homotetramer interacts with 1 SecA dimer.

It localises to the cytoplasm. One of the proteins required for the normal export of preproteins out of the cell cytoplasm. It is a molecular chaperone that binds to a subset of precursor proteins, maintaining them in a translocation-competent state. It also specifically binds to its receptor SecA. The polypeptide is Protein-export protein SecB (Acidithiobacillus ferrooxidans (strain ATCC 23270 / DSM 14882 / CIP 104768 / NCIMB 8455) (Ferrobacillus ferrooxidans (strain ATCC 23270))).